The chain runs to 496 residues: Fibronectin type III and SPRY domain-containing protein 1 (496 aa).

Positions Gln4 to Glu99 form a coiled coil. The region spanning Leu105–Leu162 is the COS domain. A Fibronectin type-III domain is found at Val164–Phe268. The 210-residue stretch at Phe268 to Ser477 folds into the B30.2/SPRY domain. The tract at residues Lys301–Asp336 is disordered. Arg310 and Arg320 each carry omega-N-methylarginine.

In terms of assembly, oligomerization is required for binding to microtubules.

It is found in the cytoplasm. Its subcellular location is the cytoskeleton. It localises to the microtubule organizing center. The protein resides in the centrosome. The protein localises to the nucleus. It is found in the cleavage furrow. May be involved in microtubule organization and stabilization. This Macaca fascicularis (Crab-eating macaque) protein is Fibronectin type III and SPRY domain-containing protein 1 (FSD1).